We begin with the raw amino-acid sequence, 188 residues long: Elongation factor P (188 aa).

At K34 the chain carries N6-(3,6-diaminohexanoyl)-5-hydroxylysine.

This sequence belongs to the elongation factor P family. Post-translationally, may be beta-lysylated on the epsilon-amino group of Lys-34 by the combined action of EpmA and EpmB, and then hydroxylated on the C5 position of the same residue by EpmC (if this protein is present). Lysylation is critical for the stimulatory effect of EF-P on peptide-bond formation. The lysylation moiety may extend toward the peptidyltransferase center and stabilize the terminal 3-CCA end of the tRNA. Hydroxylation of the C5 position on Lys-34 may allow additional potential stabilizing hydrogen-bond interactions with the P-tRNA.

The protein resides in the cytoplasm. Its pathway is protein biosynthesis; polypeptide chain elongation. Its function is as follows. Involved in peptide bond synthesis. Alleviates ribosome stalling that occurs when 3 or more consecutive Pro residues or the sequence PPG is present in a protein, possibly by augmenting the peptidyl transferase activity of the ribosome. Modification of Lys-34 is required for alleviation. The protein is Elongation factor P of Haemophilus influenzae (strain 86-028NP).